Reading from the N-terminus, the 352-residue chain is UDP-N-acetylglucosamine--N-acetylmuramyl-(pentapeptide) pyrophosphoryl-undecaprenol N-acetylglucosamine transferase (352 aa).

2 residues coordinate UDP-N-acetyl-alpha-D-glucosamine: Ser195 and Gln287.

The protein belongs to the glycosyltransferase 28 family. MurG subfamily.

The protein resides in the cell membrane. It catalyses the reaction Mur2Ac(oyl-L-Ala-gamma-D-Glu-L-Lys-D-Ala-D-Ala)-di-trans,octa-cis-undecaprenyl diphosphate + UDP-N-acetyl-alpha-D-glucosamine = beta-D-GlcNAc-(1-&gt;4)-Mur2Ac(oyl-L-Ala-gamma-D-Glu-L-Lys-D-Ala-D-Ala)-di-trans,octa-cis-undecaprenyl diphosphate + UDP + H(+). It functions in the pathway cell wall biogenesis; peptidoglycan biosynthesis. Cell wall formation. Catalyzes the transfer of a GlcNAc subunit on undecaprenyl-pyrophosphoryl-MurNAc-pentapeptide (lipid intermediate I) to form undecaprenyl-pyrophosphoryl-MurNAc-(pentapeptide)GlcNAc (lipid intermediate II). The sequence is that of UDP-N-acetylglucosamine--N-acetylmuramyl-(pentapeptide) pyrophosphoryl-undecaprenol N-acetylglucosamine transferase from Streptococcus pneumoniae serotype 4 (strain ATCC BAA-334 / TIGR4).